Consider the following 500-residue polypeptide: Probable malate:quinone oxidoreductase (500 aa).

This sequence belongs to the MQO family. FAD is required as a cofactor.

The catalysed reaction is (S)-malate + a quinone = a quinol + oxaloacetate. Its pathway is carbohydrate metabolism; tricarboxylic acid cycle; oxaloacetate from (S)-malate (quinone route): step 1/1. This Bacillus cereus (strain ATCC 10987 / NRS 248) protein is Probable malate:quinone oxidoreductase.